Here is a 373-residue protein sequence, read N- to C-terminus: Protein SENSITIVE TO PROTON RHIZOTOXICITY 2 (373 aa).

C2H2-type zinc fingers lie at residues 217-239 and 327-362; these read HYCQ…MRAH and KHCG…VPAH.

In terms of tissue distribution, expressed at low levels in roots (e.g. root tips and lateral roots), leaves (e.g. at the edge of mature leaves, possibly in hydathodes, and in vascular bundles), flowers (e.g. floral filaments), stems, siliques and cotyledons.

It is found in the nucleus. In terms of biological role, probable transcription factor. Together with STOP1, plays a critical role in tolerance to major stress factors in acid soils such as proton H(+) and aluminum ion Al(3+). Required for the expression of genes in response to acidic stress (e.g. ALMT1 and MATE), and Al-activated citrate exudation. The protein is Protein SENSITIVE TO PROTON RHIZOTOXICITY 2 of Arabidopsis thaliana (Mouse-ear cress).